Consider the following 261-residue polypeptide: tRNA U34 carboxymethyltransferase (261 aa).

Residues Lys-25, Trp-39, Lys-44, Gly-63, 114–115 (VE), Tyr-135, and Arg-250 each bind carboxy-S-adenosyl-L-methionine.

It belongs to the class I-like SAM-binding methyltransferase superfamily. CmoB family. In terms of assembly, homotetramer.

The catalysed reaction is carboxy-S-adenosyl-L-methionine + 5-hydroxyuridine(34) in tRNA = 5-carboxymethoxyuridine(34) in tRNA + S-adenosyl-L-homocysteine + H(+). Catalyzes carboxymethyl transfer from carboxy-S-adenosyl-L-methionine (Cx-SAM) to 5-hydroxyuridine (ho5U) to form 5-carboxymethoxyuridine (cmo5U) at position 34 in tRNAs. In Helicobacter pylori (strain Shi470), this protein is tRNA U34 carboxymethyltransferase.